The chain runs to 145 residues: Large ribosomal subunit protein uL15 (145 aa).

Residues 1–30 are compositionally biased toward basic residues; the sequence is MAHSLRKTRKLRGHVSHGHGRIGKHRKHPG. The tract at residues 1-48 is disordered; that stretch reads MAHSLRKTRKLRGHVSHGHGRIGKHRKHPGGRGNAGGQHHHRINRDKY.

This sequence belongs to the universal ribosomal protein uL15 family. As to quaternary structure, component of the large ribosomal subunit.

Its subcellular location is the cytoplasm. It localises to the cytosol. It is found in the rough endoplasmic reticulum. Functionally, component of the large ribosomal subunit. This Oscheius tipulae protein is Large ribosomal subunit protein uL15 (rpl-27a).